Reading from the N-terminus, the 411-residue chain is Serine hydroxymethyltransferase (411 aa).

Residues L119 and 123–125 (GHL) contribute to the (6S)-5,6,7,8-tetrahydrofolate site. K228 bears the N6-(pyridoxal phosphate)lysine mark. 351 to 353 (SPF) provides a ligand contact to (6S)-5,6,7,8-tetrahydrofolate.

Belongs to the SHMT family. As to quaternary structure, homodimer. It depends on pyridoxal 5'-phosphate as a cofactor.

The protein resides in the cytoplasm. The catalysed reaction is (6R)-5,10-methylene-5,6,7,8-tetrahydrofolate + glycine + H2O = (6S)-5,6,7,8-tetrahydrofolate + L-serine. The protein operates within one-carbon metabolism; tetrahydrofolate interconversion. Its pathway is amino-acid biosynthesis; glycine biosynthesis; glycine from L-serine: step 1/1. Functionally, catalyzes the reversible interconversion of serine and glycine with tetrahydrofolate (THF) serving as the one-carbon carrier. This reaction serves as the major source of one-carbon groups required for the biosynthesis of purines, thymidylate, methionine, and other important biomolecules. Also exhibits THF-independent aldolase activity toward beta-hydroxyamino acids, producing glycine and aldehydes, via a retro-aldol mechanism. In Clostridium botulinum (strain Alaska E43 / Type E3), this protein is Serine hydroxymethyltransferase.